We begin with the raw amino-acid sequence, 364 residues long: Probable tartrate dehydrogenase/decarboxylase TtuC (364 aa).

Mn(2+) is bound by residues D222, D246, and D250.

It belongs to the isocitrate and isopropylmalate dehydrogenases family. The cofactor is Mg(2+). It depends on Mn(2+) as a cofactor. K(+) serves as cofactor.

The protein resides in the cytoplasm. It carries out the reaction tartrate + NAD(+) = 2-hydroxy-3-oxosuccinate + NADH + H(+). The catalysed reaction is (2R,3S)-tartrate + NAD(+) = 2-hydroxy-3-oxosuccinate + NADH + H(+). It catalyses the reaction (2R,3R)-tartrate + NAD(+) = 2-hydroxy-3-oxosuccinate + NADH + H(+). The enzyme catalyses (2R,3R)-tartrate + H(+) = (R)-glycerate + CO2. It carries out the reaction (R)-malate + NAD(+) = pyruvate + CO2 + NADH. Its pathway is carbohydrate acid metabolism; tartrate degradation; 2-hydroxy-3-oxosuccinate from L-tartrate: step 1/1. It functions in the pathway carbohydrate acid metabolism; tartrate degradation; 2-hydroxy-3-oxosuccinate from meso-tartrate: step 1/1. It participates in carbohydrate acid metabolism; tartrate degradation; D-glycerate from L-tartrate: step 1/1. Its function is as follows. Has multiple catalytic activities. Apart from catalyzing the oxidation of (+)-tartrate to oxaloglycolate, also converts meso-tartrate to D-glycerate and catalyzes the oxidative decarboxylation of D-malate to pyruvate. The chain is Probable tartrate dehydrogenase/decarboxylase TtuC (ttuC) from Agrobacterium vitis (Rhizobium vitis).